The sequence spans 137 residues: MVFCVDTSAWHHAARPEVARRWLAALSADQIGICDHVRLEILYSANSATDYDALADELDGLARIPVGAETFTRACQVQRELAHVAGLHHRSVKIADLVIAAAAELSGTIVWHYDENYDRVAAITGQPTEWIVPRGTL.

The PINc domain maps to 4–126 (CVDTSAWHHA…YDRVAAITGQ (123 aa)). Aspartate 6 and aspartate 96 together coordinate Mg(2+).

Belongs to the PINc/VapC protein family. Mg(2+) is required as a cofactor.

Its function is as follows. Toxic component of a type II toxin-antitoxin (TA) system. An RNase. The cognate antitoxin is VapB18. In Mycobacterium tuberculosis (strain ATCC 25618 / H37Rv), this protein is Ribonuclease VapC18.